The following is an 87-amino-acid chain: Small ribosomal subunit protein bS20 (87 aa).

The disordered stretch occupies residues 1–26 (MANTAQAKKRVRQNIKQRERNSGLRS).

The protein belongs to the bacterial ribosomal protein bS20 family.

In terms of biological role, binds directly to 16S ribosomal RNA. The chain is Small ribosomal subunit protein bS20 from Nitrosomonas eutropha (strain DSM 101675 / C91 / Nm57).